Reading from the N-terminus, the 139-residue chain is Classical arabinogalactan protein 3 (139 aa).

The signal sequence occupies residues 1–21 (MALKTLQALIFLGLFAASCLA). Position 22 is a pyrrolidone carboxylic acid (glutamine 22). The disordered stretch occupies residues 30 to 115 (TFLPPVESPS…PAPRADGPVA (86 aa)). 2 stretches are compositionally biased toward pro residues: residues 46–77 (AEPPAPVASPPIPANEPTPVPTTPPTVSPPTT) and 97–107 (PSGPTPAPAPA). A lipid anchor (GPI-anchor amidated aspartate) is attached at aspartate 116. Positions 117–139 (SALTNKAFLVSTVIAGALYAVLA) are cleaved as a propeptide — removed in mature form.

Belongs to the classical AGP family. O-glycosylated on the hydroxyproline residues. As to expression, expressed at a low level in roots.

It is found in the cell membrane. In terms of biological role, proteoglycan that seems to be implicated in diverse developmental roles such as differentiation, cell-cell recognition, embryogenesis and programmed cell death. The chain is Classical arabinogalactan protein 3 (AGP3) from Arabidopsis thaliana (Mouse-ear cress).